An 88-amino-acid polypeptide reads, in one-letter code: Enticin (88 aa).

A signal peptide spans 1–19; that stretch reads MKTALPLLLLTCLVAAVQS. 3 cysteine pairs are disulfide-bonded: C25-C33, C40-C52, and C59-C67. Residues 69-88 constitute a propeptide that is removed on maturation; the sequence is REQSQLNHDHLNNHTTTQQP.

Binds to attractin and temptin.

It localises to the secreted. A component of the complex of water-borne protein pheromones that stimulates attraction and mating behavior. The sequence is that of Enticin from Aplysia californica (California sea hare).